The primary structure comprises 360 residues: 3-dehydroquinate synthase (360 aa).

Residues 106–110 (GVIGD), 130–131 (TS), lysine 143, and lysine 152 each bind NAD(+). Zn(2+) contacts are provided by glutamate 185, histidine 246, and histidine 262.

The protein belongs to the sugar phosphate cyclases superfamily. Dehydroquinate synthase family. It depends on Co(2+) as a cofactor. Zn(2+) serves as cofactor. Requires NAD(+) as cofactor.

It is found in the cytoplasm. The enzyme catalyses 7-phospho-2-dehydro-3-deoxy-D-arabino-heptonate = 3-dehydroquinate + phosphate. Its pathway is metabolic intermediate biosynthesis; chorismate biosynthesis; chorismate from D-erythrose 4-phosphate and phosphoenolpyruvate: step 2/7. Catalyzes the conversion of 3-deoxy-D-arabino-heptulosonate 7-phosphate (DAHP) to dehydroquinate (DHQ). This is 3-dehydroquinate synthase from Leuconostoc citreum (strain KM20).